Consider the following 262-residue polypeptide: Mediator of RNA polymerase II transcription subunit 8 (262 aa).

A coiled-coil region spans residues 168–211 (LEEKEMGVKNVITGLKRQLDEGDEEDEEEEEEEEDMQGEEMEVV). The segment at 183–206 (KRQLDEGDEEDEEEEEEEEDMQGE) is disordered. The span at 188–206 (EGDEEDEEEEEEEEDMQGE) shows a compositional bias: acidic residues.

The protein belongs to the Mediator complex subunit 8 family. As to quaternary structure, component of the Mediator complex.

The protein resides in the nucleus. Its function is as follows. Component of the Mediator complex, a coactivator involved in the regulated transcription of nearly all RNA polymerase II-dependent genes. Mediator functions as a bridge to convey information from gene-specific regulatory proteins to the basal RNA polymerase II transcription machinery. Mediator is recruited to promoters by direct interactions with regulatory proteins and serves as a scaffold for the assembly of a functional preinitiation complex with RNA polymerase II and the general transcription factors. The protein is Mediator of RNA polymerase II transcription subunit 8 (MED8) of Coccidioides immitis (strain RS) (Valley fever fungus).